Reading from the N-terminus, the 447-residue chain is Cysteine--tRNA ligase (447 aa).

Residue Cys28 coordinates Zn(2+). The short motif at 30-40 (PTVYNYIHIGN) is the 'HIGH' region element. Positions 211, 236, and 240 each coordinate Zn(2+). A 'KMSKS' region motif is present at residues 268 to 272 (KMSKS). Residue Lys271 coordinates ATP.

Belongs to the class-I aminoacyl-tRNA synthetase family. In terms of assembly, monomer. Zn(2+) is required as a cofactor.

It is found in the cytoplasm. The catalysed reaction is tRNA(Cys) + L-cysteine + ATP = L-cysteinyl-tRNA(Cys) + AMP + diphosphate. This is Cysteine--tRNA ligase from Streptococcus agalactiae serotype V (strain ATCC BAA-611 / 2603 V/R).